We begin with the raw amino-acid sequence, 265 residues long: Glutamate racemase (265 aa).

Substrate is bound by residues 7 to 8 and 39 to 40; these read DS and YG. C70 serves as the catalytic Proton donor/acceptor. Position 71–72 (71–72) interacts with substrate; that stretch reads NT. C179 (proton donor/acceptor) is an active-site residue. A substrate-binding site is contributed by 180 to 181; that stretch reads TH.

Belongs to the aspartate/glutamate racemases family.

It catalyses the reaction L-glutamate = D-glutamate. Its pathway is cell wall biogenesis; peptidoglycan biosynthesis. In terms of biological role, provides the (R)-glutamate required for cell wall biosynthesis. This is Glutamate racemase from Gloeobacter violaceus (strain ATCC 29082 / PCC 7421).